A 303-amino-acid chain; its full sequence is Putative F-box protein At5g62060 (303 aa).

The F-box domain occupies 27–74 (KSRYIDIPLDITVEILKKLPAKSLVRFQCVSKQWSTIIGSRRDFIDSI).

This Arabidopsis thaliana (Mouse-ear cress) protein is Putative F-box protein At5g62060.